Here is a 598-residue protein sequence, read N- to C-terminus: Elongation factor 4 (598 aa).

The tr-type G domain occupies 2–183 (KKIRNFCIIA…AIIEKIPPPK (182 aa)). GTP contacts are provided by residues 14 to 19 (DHGKST) and 130 to 133 (NKVD).

This sequence belongs to the TRAFAC class translation factor GTPase superfamily. Classic translation factor GTPase family. LepA subfamily.

It is found in the cell inner membrane. The enzyme catalyses GTP + H2O = GDP + phosphate + H(+). Its function is as follows. Required for accurate and efficient protein synthesis under certain stress conditions. May act as a fidelity factor of the translation reaction, by catalyzing a one-codon backward translocation of tRNAs on improperly translocated ribosomes. Back-translocation proceeds from a post-translocation (POST) complex to a pre-translocation (PRE) complex, thus giving elongation factor G a second chance to translocate the tRNAs correctly. Binds to ribosomes in a GTP-dependent manner. The protein is Elongation factor 4 of Flavobacterium johnsoniae (strain ATCC 17061 / DSM 2064 / JCM 8514 / BCRC 14874 / CCUG 350202 / NBRC 14942 / NCIMB 11054 / UW101) (Cytophaga johnsonae).